The primary structure comprises 204 residues: Thiamine-phosphate synthase (204 aa).

Residues 35 to 39 (QVREK) and N67 contribute to the 4-amino-2-methyl-5-(diphosphooxymethyl)pyrimidine site. Mg(2+) contacts are provided by D68 and D87. S106 is a binding site for 4-amino-2-methyl-5-(diphosphooxymethyl)pyrimidine. Residue 132–134 (TPT) coordinates 2-[(2R,5Z)-2-carboxy-4-methylthiazol-5(2H)-ylidene]ethyl phosphate. K135 contacts 4-amino-2-methyl-5-(diphosphooxymethyl)pyrimidine. 2-[(2R,5Z)-2-carboxy-4-methylthiazol-5(2H)-ylidene]ethyl phosphate is bound by residues G163 and 183-184 (VS).

Belongs to the thiamine-phosphate synthase family. Requires Mg(2+) as cofactor.

The enzyme catalyses 2-[(2R,5Z)-2-carboxy-4-methylthiazol-5(2H)-ylidene]ethyl phosphate + 4-amino-2-methyl-5-(diphosphooxymethyl)pyrimidine + 2 H(+) = thiamine phosphate + CO2 + diphosphate. The catalysed reaction is 2-(2-carboxy-4-methylthiazol-5-yl)ethyl phosphate + 4-amino-2-methyl-5-(diphosphooxymethyl)pyrimidine + 2 H(+) = thiamine phosphate + CO2 + diphosphate. It catalyses the reaction 4-methyl-5-(2-phosphooxyethyl)-thiazole + 4-amino-2-methyl-5-(diphosphooxymethyl)pyrimidine + H(+) = thiamine phosphate + diphosphate. It participates in cofactor biosynthesis; thiamine diphosphate biosynthesis; thiamine phosphate from 4-amino-2-methyl-5-diphosphomethylpyrimidine and 4-methyl-5-(2-phosphoethyl)-thiazole: step 1/1. Condenses 4-methyl-5-(beta-hydroxyethyl)thiazole monophosphate (THZ-P) and 2-methyl-4-amino-5-hydroxymethyl pyrimidine pyrophosphate (HMP-PP) to form thiamine monophosphate (TMP). In Vibrio parahaemolyticus serotype O3:K6 (strain RIMD 2210633), this protein is Thiamine-phosphate synthase.